The chain runs to 155 residues: Putative pre-16S rRNA nuclease (155 aa).

It belongs to the YqgF nuclease family.

It localises to the cytoplasm. In terms of biological role, could be a nuclease involved in processing of the 5'-end of pre-16S rRNA. The chain is Putative pre-16S rRNA nuclease from Xanthomonas campestris pv. campestris (strain B100).